We begin with the raw amino-acid sequence, 196 residues long: Putative tyrosine-protein phosphatase OCA1 (196 aa).

The Tyrosine-protein phosphatase domain maps to Asn-33 to Pro-192. The active-site Phosphocysteine intermediate is the Cys-130.

The protein belongs to the protein-tyrosine phosphatase family.

The protein resides in the cytoplasm. The enzyme catalyses O-phospho-L-tyrosyl-[protein] + H2O = L-tyrosyl-[protein] + phosphate. Its function is as follows. Putative tyrosine-protein phosphatase required for protection against superoxide stress. This chain is Putative tyrosine-protein phosphatase OCA1 (OCA1), found in Debaryomyces hansenii (strain ATCC 36239 / CBS 767 / BCRC 21394 / JCM 1990 / NBRC 0083 / IGC 2968) (Yeast).